The sequence spans 305 residues: Oxygen-dependent coproporphyrinogen-III oxidase (305 aa).

Ser-98 provides a ligand contact to substrate. A divalent metal cation is bound by residues His-102 and His-112. His-112 acts as the Proton donor in catalysis. Position 114–116 (114–116 (NVR)) interacts with substrate. 2 residues coordinate a divalent metal cation: His-151 and His-181. The important for dimerization stretch occupies residues 246–281 (YVEFNLVYDRGTLFGLQSGGRTESILMSMPPLARWE). Substrate is bound at residue 264–266 (GGR).

Belongs to the aerobic coproporphyrinogen-III oxidase family. In terms of assembly, homodimer. The cofactor is a divalent metal cation.

It is found in the cytoplasm. It carries out the reaction coproporphyrinogen III + O2 + 2 H(+) = protoporphyrinogen IX + 2 CO2 + 2 H2O. It participates in porphyrin-containing compound metabolism; protoporphyrin-IX biosynthesis; protoporphyrinogen-IX from coproporphyrinogen-III (O2 route): step 1/1. In terms of biological role, involved in the heme biosynthesis. Catalyzes the aerobic oxidative decarboxylation of propionate groups of rings A and B of coproporphyrinogen-III to yield the vinyl groups in protoporphyrinogen-IX. The chain is Oxygen-dependent coproporphyrinogen-III oxidase from Vibrio atlanticus (strain LGP32) (Vibrio splendidus (strain Mel32)).